The chain runs to 532 residues: Cytochrome c oxidase subunit 1 (532 aa).

A run of 3 helical transmembrane segments spans residues Met-1–Ala-21, Leu-27–Val-47, and Gly-69–Phe-89. His-114 is a binding site for heme b. Helical transmembrane passes span Thr-115–Val-135, Leu-143–Thr-163, Leu-185–Phe-205, Ile-212–Val-232, Gly-263–Val-283, Leu-296–Leu-316, Leu-328–Leu-348, and Met-366–Ile-386. The Cu cation site is built by His-264, His-314, and His-315. His-402 and His-404 together coordinate heme b. Helical transmembrane passes span Val-403–Thr-423, Phe-442–Met-462, and Val-496–Val-516.

It belongs to the heme-copper respiratory oxidase family. Cu(2+) serves as cofactor. The cofactor is heme b.

It is found in the cell membrane. The enzyme catalyses 4 Fe(II)-[cytochrome c] + O2 + 8 H(+)(in) = 4 Fe(III)-[cytochrome c] + 2 H2O + 4 H(+)(out). Its pathway is energy metabolism; oxidative phosphorylation. Cytochrome c oxidase is the component of the respiratory chain that catalyzes the reduction of oxygen to water. Subunits 1-3 form the functional core of the enzyme complex. Co I is the catalytic subunit of the enzyme. Electrons originating in cytochrome c are transferred via the copper A center of subunit 2 and heme a of subunit 1 to the bimetallic center formed by heme a3 and copper B. This cytochrome c oxidase shows proton pump activity across the membrane in addition to the electron transfer. This Rhodobacter capsulatus (Rhodopseudomonas capsulata) protein is Cytochrome c oxidase subunit 1 (ctaD).